A 130-amino-acid polypeptide reads, in one-letter code: Ribonuclease P protein component 2 (130 aa).

Belongs to the eukaryotic/archaeal RNase P protein component 2 family. Consists of a catalytic RNA component and at least 4-5 protein subunits.

It localises to the cytoplasm. It carries out the reaction Endonucleolytic cleavage of RNA, removing 5'-extranucleotides from tRNA precursor.. Functionally, part of ribonuclease P, a protein complex that generates mature tRNA molecules by cleaving their 5'-ends. The protein is Ribonuclease P protein component 2 of Methanococcus maripaludis (strain C6 / ATCC BAA-1332).